The primary structure comprises 398 residues: Succinate--CoA ligase [ADP-forming] subunit beta (398 aa).

Residues 9–250 (KQLFARYGVP…VDEEDPVELQ (242 aa)) enclose the ATP-grasp domain. ATP-binding positions include lysine 50, 57–59 (GRG), glutamate 104, leucine 107, and glutamate 112. Positions 205 and 219 each coordinate Mg(2+). Substrate-binding positions include asparagine 270 and 327–329 (GIM).

Belongs to the succinate/malate CoA ligase beta subunit family. In terms of assembly, heterotetramer of two alpha and two beta subunits. Mg(2+) is required as a cofactor.

The enzyme catalyses succinate + ATP + CoA = succinyl-CoA + ADP + phosphate. The catalysed reaction is GTP + succinate + CoA = succinyl-CoA + GDP + phosphate. Its pathway is carbohydrate metabolism; tricarboxylic acid cycle; succinate from succinyl-CoA (ligase route): step 1/1. Succinyl-CoA synthetase functions in the citric acid cycle (TCA), coupling the hydrolysis of succinyl-CoA to the synthesis of either ATP or GTP and thus represents the only step of substrate-level phosphorylation in the TCA. The beta subunit provides nucleotide specificity of the enzyme and binds the substrate succinate, while the binding sites for coenzyme A and phosphate are found in the alpha subunit. This Sorangium cellulosum (strain So ce56) (Polyangium cellulosum (strain So ce56)) protein is Succinate--CoA ligase [ADP-forming] subunit beta.